A 259-amino-acid chain; its full sequence is BTB/POZ domain-containing protein KCTD4 (259 aa).

Residues Thr-33 to Gln-134 enclose the BTB domain.

In Mus musculus (Mouse), this protein is BTB/POZ domain-containing protein KCTD4 (Kctd4).